Consider the following 830-residue polypeptide: Periplasmic nitrate reductase (830 aa).

The segment at residues 1–32 (MELNRRDFMKANAAVAAAAAAGITIPVKNVHA) is a signal peptide (tat-type signal). One can recognise a 4Fe-4S Mo/W bis-MGD-type domain in the interval 39–95 (IRWDKAPCRYCGTGCSVLVGTKDGRVVATQGDPDAEVNRGLNCIKGYFLSKIMYGAD). Positions 46, 49, 53, and 81 each coordinate [4Fe-4S] cluster. Residues lysine 83, glutamine 151, asparagine 176, cysteine 180, 213–220 (WGSNMAEM), 244–248 (STFEH), methionine 374, glutamine 378, asparagine 484, 510–511 (SD), lysine 533, aspartate 560, and 720–729 (TGRVLEHWHT) each bind Mo-bis(molybdopterin guanine dinucleotide). Phenylalanine 796 lines the substrate pocket. Positions 804 and 821 each coordinate Mo-bis(molybdopterin guanine dinucleotide).

The protein belongs to the prokaryotic molybdopterin-containing oxidoreductase family. NasA/NapA/NarB subfamily. As to quaternary structure, component of the periplasmic nitrate reductase NapAB complex composed of NapA and NapB. It depends on [4Fe-4S] cluster as a cofactor. Mo-bis(molybdopterin guanine dinucleotide) serves as cofactor. Predicted to be exported by the Tat system. The position of the signal peptide cleavage has not been experimentally proven.

The protein localises to the periplasm. It carries out the reaction 2 Fe(II)-[cytochrome] + nitrate + 2 H(+) = 2 Fe(III)-[cytochrome] + nitrite + H2O. Functionally, catalytic subunit of the periplasmic nitrate reductase complex NapAB. Receives electrons from NapB and catalyzes the reduction of nitrate to nitrite. The polypeptide is Periplasmic nitrate reductase (Mannheimia succiniciproducens (strain KCTC 0769BP / MBEL55E)).